Reading from the N-terminus, the 230-residue chain is Orotidine 5'-phosphate decarboxylase (230 aa).

Substrate contacts are provided by residues D10, K31, 58 to 67 (DLKLHDIPNT), T117, R179, Q188, G208, and R209. K60 serves as the catalytic Proton donor.

The protein belongs to the OMP decarboxylase family. Type 1 subfamily. As to quaternary structure, homodimer.

It carries out the reaction orotidine 5'-phosphate + H(+) = UMP + CO2. It functions in the pathway pyrimidine metabolism; UMP biosynthesis via de novo pathway; UMP from orotate: step 2/2. Functionally, catalyzes the decarboxylation of orotidine 5'-monophosphate (OMP) to uridine 5'-monophosphate (UMP). The protein is Orotidine 5'-phosphate decarboxylase of Staphylococcus aureus (strain bovine RF122 / ET3-1).